A 105-amino-acid polypeptide reads, in one-letter code: MNTLFGKAKEEARVISPKSVDEYPEAPITLGTTLVNFTGDWRTFMPVIDESKCVKCYICWKFCPEPAIYIKEDGFVAIDYDYCKGCGICANECPTKAITMVREEK.

4Fe-4S ferredoxin-type domains are found at residues 44-73 and 74-103; these read FMPV…IKED and GFVA…MVRE. Residues C53, C56, C59, C63, C83, C86, C89, and C93 each coordinate [4Fe-4S] cluster.

In terms of assembly, heterotetramer of one alpha, one beta, one delta and one gamma chain. It depends on [4Fe-4S] cluster as a cofactor.

The enzyme catalyses 3-methyl-2-oxobutanoate + 2 oxidized [2Fe-2S]-[ferredoxin] + CoA = 2-methylpropanoyl-CoA + 2 reduced [2Fe-2S]-[ferredoxin] + CO2 + H(+). This Pyrococcus abyssi (strain GE5 / Orsay) protein is Ketoisovalerate oxidoreductase subunit VorD (vorD).